A 262-amino-acid chain; its full sequence is tRNA (guanine-N(1)-)-methyltransferase (262 aa).

Residues Gly112 and 132 to 137 (IGDYIL) contribute to the S-adenosyl-L-methionine site.

Belongs to the RNA methyltransferase TrmD family. In terms of assembly, homodimer.

The protein resides in the cytoplasm. It carries out the reaction guanosine(37) in tRNA + S-adenosyl-L-methionine = N(1)-methylguanosine(37) in tRNA + S-adenosyl-L-homocysteine + H(+). In terms of biological role, specifically methylates guanosine-37 in various tRNAs. The polypeptide is tRNA (guanine-N(1)-)-methyltransferase (Desulfatibacillum aliphaticivorans).